Consider the following 336-residue polypeptide: Glyceraldehyde-3-phosphate dehydrogenase 1 (336 aa).

Residues 12–13, aspartate 34, and arginine 79 each bind NAD(+); that span reads RI. D-glyceraldehyde 3-phosphate is bound by residues 149–151, threonine 180, 209–210, and arginine 232; these read SCT and TG. Residue cysteine 150 is the Nucleophile of the active site. Asparagine 314 serves as a coordination point for NAD(+).

The protein belongs to the glyceraldehyde-3-phosphate dehydrogenase family. As to quaternary structure, homotetramer.

It is found in the cytoplasm. It catalyses the reaction D-glyceraldehyde 3-phosphate + phosphate + NAD(+) = (2R)-3-phospho-glyceroyl phosphate + NADH + H(+). It participates in carbohydrate degradation; glycolysis; pyruvate from D-glyceraldehyde 3-phosphate: step 1/5. Its activity is regulated as follows. Inhibited by koningic acid through the interaction of cysteine residues with koningic acid even at very low concentrations. This Trichoderma koningii (Hypocrea koningii) protein is Glyceraldehyde-3-phosphate dehydrogenase 1 (gpd1).